The primary structure comprises 329 residues: Vitamin B12 import system permease protein BtuC (329 aa).

Helical transmembrane passes span 18–38 (WLLSLSLLVLLATLLSLCAGE), 64–84 (LAVLLVGASLALSGAVMQALF), 91–111 (PGLLGVSNGAGVGLIAAVLLG), 115–135 (LPGWSLGLCAIAGALTITLIL), 149–169 (LLAGVALGIICSALMTWAIYF), 191–208 (WQQSWLMTALIPVLIWIC), 243–263 (GWMVGVSVAMAGAIGFIGLVI), 277–297 (VLLPGCALAGAIALLLADVVA), and 305–325 (ELPIGVVTATLGAPIFIWLLL).

It belongs to the binding-protein-dependent transport system permease family. FecCD subfamily. In terms of assembly, the complex is composed of two ATP-binding proteins (BtuD), two transmembrane proteins (BtuC) and a solute-binding protein (BtuF).

It localises to the cell inner membrane. In terms of biological role, part of the ABC transporter complex BtuCDF involved in vitamin B12 import. Involved in the translocation of the substrate across the membrane. This chain is Vitamin B12 import system permease protein BtuC, found in Salmonella arizonae (strain ATCC BAA-731 / CDC346-86 / RSK2980).